Consider the following 196-residue polypeptide: RNA polymerase II subunit B1 CTD phosphatase RTR2 (196 aa).

The RTR1-type zinc finger occupies 52–123 (YLARLLSPMS…LSQTPLHERR (72 aa)). The Zn(2+) site is built by C75, C80, C99, and H103.

This sequence belongs to the RPAP2 family.

It is found in the cytoplasm. Its subcellular location is the nucleus. The catalysed reaction is O-phospho-L-seryl-[protein] + H2O = L-seryl-[protein] + phosphate. It carries out the reaction O-phospho-L-threonyl-[protein] + H2O = L-threonyl-[protein] + phosphate. Its function is as follows. Probable RNA polymerase II subunit B1 C-terminal domain (CTD) phosphatase that regulates RNA polymerase II transcription. May have functional redundancy with RTR1. The polypeptide is RNA polymerase II subunit B1 CTD phosphatase RTR2 (RTR2) (Saccharomyces cerevisiae (strain ATCC 204508 / S288c) (Baker's yeast)).